The following is a 413-amino-acid chain: DNA polymerase IV 1 (413 aa).

Residues Ile7–Gly188 form the UmuC domain. Residues Asp11 and Asp107 each contribute to the Mg(2+) site. Residue Glu108 is part of the active site.

Belongs to the DNA polymerase type-Y family. Monomer. Mg(2+) is required as a cofactor.

It localises to the cytoplasm. It catalyses the reaction DNA(n) + a 2'-deoxyribonucleoside 5'-triphosphate = DNA(n+1) + diphosphate. Functionally, poorly processive, error-prone DNA polymerase involved in untargeted mutagenesis. Copies undamaged DNA at stalled replication forks, which arise in vivo from mismatched or misaligned primer ends. These misaligned primers can be extended by PolIV. Exhibits no 3'-5' exonuclease (proofreading) activity. May be involved in translesional synthesis, in conjunction with the beta clamp from PolIII. This is DNA polymerase IV 1 (dinB1) from Halalkalibacterium halodurans (strain ATCC BAA-125 / DSM 18197 / FERM 7344 / JCM 9153 / C-125) (Bacillus halodurans).